Reading from the N-terminus, the 428-residue chain is Enolase (428 aa).

A (2R)-2-phosphoglycerate-binding site is contributed by Gln-163. Residue Glu-205 is the Proton donor of the active site. Residues Asp-242, Glu-285, and Asp-312 each contribute to the Mg(2+) site. Residues Lys-337, Arg-366, Ser-367, and Lys-388 each contribute to the (2R)-2-phosphoglycerate site. Lys-337 serves as the catalytic Proton acceptor.

Belongs to the enolase family. Mg(2+) is required as a cofactor.

It localises to the cytoplasm. Its subcellular location is the secreted. The protein resides in the cell surface. The enzyme catalyses (2R)-2-phosphoglycerate = phosphoenolpyruvate + H2O. Its pathway is carbohydrate degradation; glycolysis; pyruvate from D-glyceraldehyde 3-phosphate: step 4/5. Its function is as follows. Catalyzes the reversible conversion of 2-phosphoglycerate (2-PG) into phosphoenolpyruvate (PEP). It is essential for the degradation of carbohydrates via glycolysis. In Persephonella marina (strain DSM 14350 / EX-H1), this protein is Enolase.